Reading from the N-terminus, the 123-residue chain is MCEVCVMVTSSQPRKQRKFRYEAPQHVRSNFINARLSEELSKKYGRTARVIVGDTVKVMRGDAAGTEGKVREIDVKREKVVVEGVSVARADGKEEARPIHPSNLMITKLVLDDPKRVASLERK.

The protein belongs to the universal ribosomal protein uL24 family. Part of the 50S ribosomal subunit.

Its function is as follows. One of two assembly initiator proteins, it binds directly to the 5'-end of the 23S rRNA, where it nucleates assembly of the 50S subunit. In terms of biological role, located at the polypeptide exit tunnel on the outside of the subunit. The protein is Large ribosomal subunit protein uL24 of Methanocella arvoryzae (strain DSM 22066 / NBRC 105507 / MRE50).